The following is a 321-amino-acid chain: MSQSLRIVFAGTPDFAARHLAALLSSEHEVIAVYTQPDRPAGRGKKLTASPVKNIALENNIPVYQPENFKSDEAKQELANLNADIMVVVAYGLLLPQAVLDTPRLGCINVHGSILPRWRGAAPIQRSIWAGDKETGVTIMQMDIGLDTGDMLSIATLPIESTDTSASMYEKLAGLGPDALVECLADIASGKAVAEKQDDELANYAKKLSKEEAKIDWNDSAEHIERCVRAFNPWPMSHFAIVDSSSNDEKSIKVWQTRVDEESTSAPAGSIIKADKTGIYVATGDKVLVLEQLQVPGKKAMSVQDILNSRASWFEVGTQLS.

Residue 113–116 coordinates (6S)-5,6,7,8-tetrahydrofolate; the sequence is SILP.

This sequence belongs to the Fmt family.

The enzyme catalyses L-methionyl-tRNA(fMet) + (6R)-10-formyltetrahydrofolate = N-formyl-L-methionyl-tRNA(fMet) + (6S)-5,6,7,8-tetrahydrofolate + H(+). Attaches a formyl group to the free amino group of methionyl-tRNA(fMet). The formyl group appears to play a dual role in the initiator identity of N-formylmethionyl-tRNA by promoting its recognition by IF2 and preventing the misappropriation of this tRNA by the elongation apparatus. This Vibrio atlanticus (strain LGP32) (Vibrio splendidus (strain Mel32)) protein is Methionyl-tRNA formyltransferase.